Consider the following 428-residue polypeptide: MNNLKLARFFATISKESKYVPNSGSYPLGYKVGAIHCGVKKNSTLDLAVLVSETPASAAAVFTTNKFKAAPVQVSRQILNDKNGKGISSIVVNSGNANAVTGKGGIEDALKMVDTVDSTLKNAPSSTLVMSTGVIGQRLPIDNILKGIPVALKDVGSSHEDWLRCAQGIMTTDTFPKLVSKSFEIDGRKYSLAGLAKGAGMICPNMATLLGFFVTDAPVTPGALSKILTYATDRSFNCISVDGDMSTNDTICAMANGAAGGEEISETSSQFSKIQDEITLFAQQLAQLVVRDGEGATKFITINVQDAQSYADAKKVASSIANSALFKTAMYGKDANWGRILCAVGYADADVNVLKTNVSFIPADGSAELKLLVNGEPEKVDEERASEILELEDLEIRISLGTGGGQEANFWTCDLSHEYVTINGDYRS.

Substrate is bound by residues threonine 171, lysine 197, threonine 208, glutamate 294, asparagine 423, and serine 428. Threonine 208 serves as the catalytic Nucleophile.

The protein belongs to the ArgJ family. As to quaternary structure, heterodimer of an alpha and a beta chain. Post-translationally, the alpha and beta chains are autoproteolytically processed from a single precursor protein within the mitochondrion.

It localises to the mitochondrion matrix. It catalyses the reaction N(2)-acetyl-L-ornithine + L-glutamate = N-acetyl-L-glutamate + L-ornithine. It carries out the reaction L-glutamate + acetyl-CoA = N-acetyl-L-glutamate + CoA + H(+). The protein operates within amino-acid biosynthesis; L-arginine biosynthesis; L-ornithine and N-acetyl-L-glutamate from L-glutamate and N(2)-acetyl-L-ornithine (cyclic): step 1/1. It participates in amino-acid biosynthesis; L-arginine biosynthesis; N(2)-acetyl-L-ornithine from L-glutamate: step 1/4. Functionally, catalyzes two activities which are involved in the cyclic version of arginine biosynthesis: the synthesis of acetylglutamate from glutamate and acetyl-CoA, and of ornithine by transacetylation between acetylornithine and glutamate. The polypeptide is Arginine biosynthesis bifunctional protein ArgJ, mitochondrial (Komagataella phaffii (strain GS115 / ATCC 20864) (Yeast)).